Consider the following 887-residue polypeptide: MARQGCLGSFQVISLFTFAISVNICLGFTASRIKRAEWDEGPPTVLSDSPWTNTSGSCKGRCFELQEVGPPDCRCDNLCKSYSSCCHDFDELCLKTARGWECTKDRCGEVRNEENACHCSEDCLSRGDCCTNYQVVCKGESHWVDDDCEEIKVPECPAGFVRPPLIIFSVDGFRASYMKKGSKVMPNIEKLRSCGTHAPYMRPVYPTKTFPNLYTLATGLYPESHGIVGNSMYDPVFDASFHLRGREKFNHRWWGGQPLWITATKQGVRAGTFFWSVSIPHERRILTILQWLSLPDNERPSVYAFYSEQPDFSGHKYGPFGPEMTNPLREIDKTVGQLMDGLKQLRLHRCVNVIFVGDHGMEDVTCDRTEFLSNYLTNVDDITLVPGTLGRIRAKSINNSKYDPKTIIANLTCKKPDQHFKPYMKQHLPKRLHYANNRRIEDIHLLVDRRWHVARKPLDVYKKPSGKCFFQGDHGFDNKVNSMQTVFVGYGPTFKYRTKVPPFENIELYNVMCDLLGLKPAPNNGTHGSLNHLLRTNTFRPTMPDEVSRPNYPGIMYLQSEFDLGCTCDDKVEPKNKLEELNKRLHTKGSTEAETGKFRGSKHENKKNLNGSVEPRKERHLLYGRPAVLYRTSYDILYHTDFESGYSEIFLMPLWTSYTISKQAEVSSIPEHLTNCVRPDVRVSPGFSQNCLAYKNDKQMSYGFLFPPYLSSSPEAKYDAFLVTNMVPMYPAFKRVWAYFQRVLVKKYASERNGVNVISGPIFDYNYDGLRDTEDEIKQYVEGSSIPVPTHYYSIITSCLDFTQPADKCDGPLSVSSFILPHRPDNDESCNSSEDESKWVEELMKMHTARVRDIEHLTGLDFYRKTSRSYSEILTLKTYLHTYESEI.

The N-terminal stretch at 1 to 27 (MARQGCLGSFQVISLFTFAISVNICLG) is a signal peptide. Positions 28 to 35 (FTASRIKR) are cleaved as a propeptide — removed by furin. N-linked (GlcNAc...) asparagine glycosylation is present at N53. SMB domains are found at residues 54–97 (TSGS…LKTA) and 98–142 (RGWE…GESH). Cystine bridges form between C58/C75, C62/C93, C73/C86, C79/C85, C102/C119, C107/C137, C117/C130, C123/C129, C148/C194, and C156/C350. Residues 126–128 (RGD) carry the Cell attachment site motif. Residues 144-501 (VDDDCEEIKV…PTFKYRTKVP (358 aa)) form a phosphodiesterase region. Zn(2+)-binding residues include D171 and T209. Residue T209 is the Nucleophile of the active site. 1-(9Z-octadecenoyl)-sn-glycero-3-phosphate is bound by residues T209, N230, and D311. 1-hexadecanoyl-sn-glycero-3-phosphate is bound by residues T209, N230, and D311. Positions 209, 230, and 311 each coordinate 1-tetradecanoyl-sn-glycerol 3-phosphate. 4 residues coordinate Zn(2+): D311, H315, D358, and H359. 5 cysteine pairs are disulfide-bonded: C366/C468, C413/C830, C566/C691, C568/C676, and C799/C809. N-linked (GlcNAc...) asparagine glycans are attached at residues N398 and N410. H474 lines the Zn(2+) pocket. H474 provides a ligand contact to 1-(9Z-octadecenoyl)-sn-glycero-3-phosphate. H474 contacts 1-hexadecanoyl-sn-glycero-3-phosphate. H474 is a 1-tetradecanoyl-sn-glycerol 3-phosphate binding site. N524 carries an N-linked (GlcNAc...) asparagine glycan. Basic and acidic residues predominate over residues 586–607 (HTKGSTEAETGKFRGSKHENKK). Residues 586–615 (HTKGSTEAETGKFRGSKHENKKNLNGSVEP) are disordered. An N-linked (GlcNAc...) asparagine glycan is attached at N610. Positions 622 to 887 (LYGRPAVLYR…TYLHTYESEI (266 aa)) are nuclease-like domain. Residues D764, N766, D768, L770, and D772 each contribute to the Ca(2+) site. An N-linked (GlcNAc...) asparagine glycan is attached at N831. The interval 854 to 875 (IEHLTGLDFYRKTSRSYSEILT) is required for secretion.

This sequence belongs to the nucleotide pyrophosphatase/phosphodiesterase family. Zn(2+) serves as cofactor. The cofactor is Ca(2+). In terms of processing, N-glycosylation, but not furin-cleavage, plays a critical role on secretion and on lysoPLD activity. The interdomain disulfide bond between Cys-413 and Cys-830 is essential for catalytic activity. Abundantly expressed in cerebrum and cerebellum. Localized in secretory epithelial cells in the brain and the eye including choroid plexus epithelial cells, ciliary epithelial cells, iris pigment epithelial cells, and retinal pigment cells.

The protein localises to the secreted. It carries out the reaction a 1-O-alkyl-sn-glycero-3-phosphoethanolamine + H2O = a 1-O-alkyl-sn-glycero-3-phosphate + ethanolamine + H(+). The catalysed reaction is a 1-acyl-sn-glycero-3-phosphoethanolamine + H2O = a 1-acyl-sn-glycero-3-phosphate + ethanolamine + H(+). It catalyses the reaction 1-(9Z-octadecenoyl)-sn-glycero-3-phosphoethanolamine + H2O = 1-(9Z-octadecenoyl)-sn-glycero-3-phosphate + ethanolamine + H(+). The enzyme catalyses a 1-O-alkyl-sn-glycero-3-phosphocholine + H2O = a 1-O-alkyl-sn-glycero-3-phosphate + choline + H(+). It carries out the reaction 1-O-(9Z-octadecenyl)-sn-glycero-3-phosphocholine + H2O = 1-O-(9Z-octadecenyl)-sn-glycero-3-phosphate + choline + H(+). The catalysed reaction is 1-O-hexadecyl-sn-glycero-3-phosphocholine + H2O = 1-O-hexadecyl-sn-glycero-3-phosphate + choline + H(+). It catalyses the reaction a 1-O-(1Z-alkenyl)-sn-glycero-3-phosphocholine + H2O = a 1-O-(1Z-alkenyl)-sn-glycero-3-phosphate + choline + H(+). The enzyme catalyses a 1-acyl-sn-glycero-3-phosphocholine + H2O = a 1-acyl-sn-glycero-3-phosphate + choline + H(+). It carries out the reaction 1-dodecanoyl-sn-glycero-3-phosphocholine + H2O = 1-dodecanoyl-sn-glycerol 3-phosphate + choline + H(+). The catalysed reaction is 1-(9Z-octadecenoyl)-sn-glycero-3-phosphocholine + H2O = 1-(9Z-octadecenoyl)-sn-glycero-3-phosphate + choline + H(+). It catalyses the reaction 1-tetradecanoyl-sn-glycero-3-phosphocholine + H2O = 1-tetradecanoyl-sn-glycerol 3-phosphate + choline + H(+). The enzyme catalyses 1-decanoyl-sn-glycero-3-phosphocholine + H2O = 1-decanoyl-sn-glycero-3-phosphate + choline + H(+). It carries out the reaction 1-octadecanoyl-sn-glycero-3-phosphocholine + H2O = 1-octadecanoyl-sn-glycero-3-phosphate + choline + H(+). The catalysed reaction is 1-hexadecanoyl-sn-glycero-3-phosphocholine + H2O = 1-hexadecanoyl-sn-glycero-3-phosphate + choline + H(+). It catalyses the reaction 1-hexanoyl-sn-glycero-3-phosphocholine + H2O = 1-hexanoyl-sn-glycero-3-phosphate + choline + H(+). The enzyme catalyses 1-(9Z,12Z)-octadecadienoyl-sn-glycero-3-phosphocholine + H2O = 1-(9Z,12Z)-octadecadienoyl-sn-glycero-3-phosphate + choline + H(+). It carries out the reaction sphing-4-enine-phosphocholine + H2O = sphing-4-enine 1-phosphate + choline + H(+). The catalysed reaction is 1-(5Z,8Z,11Z,14Z-eicosatetraenoyl)-sn-glycero-3-phosphocholine + H2O = 1-(5Z,8Z,11Z,14Z-eicosatetraenoyl)-sn-glycero-3-phosphate + choline + H(+). It catalyses the reaction a 2-acyl-sn-glycero-3-phosphocholine + H2O = a 2-acyl-sn-glycerol 3-phosphate + choline + H(+). The enzyme catalyses a 1,2-diacyl-sn-glycero-3-phosphocholine + H2O = a 1,2-diacyl-sn-glycero-3-phosphate + choline + H(+). It carries out the reaction 1,2-dioctanoyl-sn-glycero-3-phosphocholine + H2O = 1,2-dioctanoyl-sn-glycero-3-phosphate + choline + H(+). The catalysed reaction is 1,2-didecanoyl-sn-glycero-3-phosphocholine + H2O = 1,2-didecanoyl-sn-glycero-3-phosphate + choline + H(+). It catalyses the reaction a 1-acyl-sn-glycero-3-phospho-L-serine + H2O = a 1-acyl-sn-glycero-3-phosphate + L-serine + H(+). The enzyme catalyses 1-(9Z-octadecenoyl)-sn-glycero-3-phospho-L-serine + H2O = 1-(9Z-octadecenoyl)-sn-glycero-3-phosphate + L-serine + H(+). It carries out the reaction a 2-acyl-sn-glycero-3-phospho-L-serine + H2O = a 2-acyl-sn-glycerol 3-phosphate + L-serine + H(+). Inhibited by vanadate. Inhibited by micromolar levels of bile salts, such as tauroursodeoxycholate. Not inhibited by taurodeoxycholate. Not inhibited by hydroxysterols, such as 7-hydroxycholesterol, testosterone, dexamethasone and prednisolone. Inhibited by EDTA and EGTA. Secreted lysophospholipase D that hydrolyzes lysophospholipids to produce the signaling molecule lysophosphatidic acid (LPA) in extracellular fluids. Its major substrate is lysophosphatidylcholine. Can also act on sphingosylphosphorylcholine producing sphingosine-1-phosphate, a modulator of cell motility. Can hydrolyze, in vitro, bis-pNPP, to some extent pNP-TMP, and barely ATP. Involved in several motility-related processes such as angiogenesis and neurite outgrowth. Acts as an angiogenic factor by stimulating migration of smooth muscle cells and microtubule formation. Stimulates migration of melanoma cells, probably via a pertussis toxin-sensitive G protein. May have a role in induction of parturition. Possible involvement in cell proliferation and adipose tissue development. Required for LPA production in activated platelets, cleaves the sn-1 lysophospholipids to generate sn-1 lysophosphatidic acids containing predominantly 18:2 and 20:4 fatty acids. Shows a preference for the sn-1 to the sn-2 isomer of 1-O-alkyl-sn-glycero-3-phosphocholine (lyso-PAF). This is Autotaxin from Rattus norvegicus (Rat).